The chain runs to 291 residues: MRKFTAFACGTGAGLAAFYLQRLRDPKQTAWVHNSWTNSERPVDSWALWDSNWDCRDPKSLVRPQKNEQPQEQNRYNSDFEKNHAKSARHIILIRHGEYLDVGDTDDTHHLTERGREQAKFTGQRLHDLGIKWDKVIASTMVRAQETADIILNEIDYDKAKVTNCAYLREGAPIPPQPPVGHWKPEASQFFRDGARIEAAFRRYFHRAYPDQTKESYTLIVGHGNVIRYFVCRALQFPPEAWLRISINHASITWLTISPSGNVSIKYLGDSGFMPVKHLTNRIPRDAKNVV.

Residues 7 to 23 (FACGTGAGLAAFYLQRL) form a helical membrane-spanning segment. Positions 59 to 78 (KSLVRPQKNEQPQEQNRYNS) are disordered. A compositionally biased stretch (polar residues) spans 67-77 (NEQPQEQNRYN).

Belongs to the phosphoglycerate mutase family. BPG-dependent PGAM subfamily. As to quaternary structure, interacts with Pk92B/ASK1.

It localises to the mitochondrion outer membrane. The enzyme catalyses O-phospho-L-seryl-[protein] + H2O = L-seryl-[protein] + phosphate. It catalyses the reaction O-phospho-L-threonyl-[protein] + H2O = L-threonyl-[protein] + phosphate. Functionally, displays phosphatase activity for serine/threonine residues, and dephosphorylates and activates Pk92B kinase. Has apparently no phosphoglycerate mutase activity. This Drosophila willistoni (Fruit fly) protein is Serine/threonine-protein phosphatase Pgam5, mitochondrial.